Here is a 1490-residue protein sequence, read N- to C-terminus: DNA-directed RNA polymerase subunit beta' (1490 aa).

Zn(2+) contacts are provided by Cys67, Cys69, Cys82, and Cys85. Residues Asp499, Asp501, and Asp503 each coordinate Mg(2+). Zn(2+) is bound by residues Cys868, Cys944, Cys951, and Cys954.

Belongs to the RNA polymerase beta' chain family. The RNAP catalytic core consists of 2 alpha, 1 beta, 1 beta' and 1 omega subunit. When a sigma factor is associated with the core the holoenzyme is formed, which can initiate transcription. Mg(2+) is required as a cofactor. The cofactor is Zn(2+).

The catalysed reaction is RNA(n) + a ribonucleoside 5'-triphosphate = RNA(n+1) + diphosphate. Functionally, DNA-dependent RNA polymerase catalyzes the transcription of DNA into RNA using the four ribonucleoside triphosphates as substrates. The protein is DNA-directed RNA polymerase subunit beta' of Chlorobaculum tepidum (strain ATCC 49652 / DSM 12025 / NBRC 103806 / TLS) (Chlorobium tepidum).